The chain runs to 86 residues: Conotoxin Lt15a (86 aa).

The signal sequence occupies residues 1-23 (MEKLTILILVATVLLAIQVLVQS). The propeptide occupies 24-49 (DGENPVKGRVKHYAAKRFSALFRGPR).

Belongs to the conotoxin O2 superfamily. In terms of processing, contains 4 disulfide bonds. As to expression, expressed by the venom duct.

It localises to the secreted. This Conus litteratus (Lettered cone) protein is Conotoxin Lt15a.